A 229-amino-acid chain; its full sequence is 5'-methylthioadenosine/S-adenosylhomocysteine nucleosidase (229 aa).

E12 acts as the Proton acceptor in catalysis. Residues G78, I152, and 173 to 174 (ME) contribute to the substrate site. D197 acts as the Proton donor in catalysis.

Belongs to the PNP/UDP phosphorylase family. MtnN subfamily.

It catalyses the reaction S-adenosyl-L-homocysteine + H2O = S-(5-deoxy-D-ribos-5-yl)-L-homocysteine + adenine. The enzyme catalyses S-methyl-5'-thioadenosine + H2O = 5-(methylsulfanyl)-D-ribose + adenine. It carries out the reaction 5'-deoxyadenosine + H2O = 5-deoxy-D-ribose + adenine. It participates in amino-acid biosynthesis; L-methionine biosynthesis via salvage pathway; S-methyl-5-thio-alpha-D-ribose 1-phosphate from S-methyl-5'-thioadenosine (hydrolase route): step 1/2. Its function is as follows. Catalyzes the irreversible cleavage of the glycosidic bond in both 5'-methylthioadenosine (MTA) and S-adenosylhomocysteine (SAH/AdoHcy) to adenine and the corresponding thioribose, 5'-methylthioribose and S-ribosylhomocysteine, respectively. Also cleaves 5'-deoxyadenosine, a toxic by-product of radical S-adenosylmethionine (SAM) enzymes, into 5-deoxyribose and adenine. In Haemophilus influenzae (strain PittGG), this protein is 5'-methylthioadenosine/S-adenosylhomocysteine nucleosidase.